We begin with the raw amino-acid sequence, 234 residues long: 2,3,4,5-tetrahydropyridine-2,6-dicarboxylate N-acetyltransferase (234 aa).

Belongs to the transferase hexapeptide repeat family. DapH subfamily.

It carries out the reaction (S)-2,3,4,5-tetrahydrodipicolinate + acetyl-CoA + H2O = L-2-acetamido-6-oxoheptanedioate + CoA. It functions in the pathway amino-acid biosynthesis; L-lysine biosynthesis via DAP pathway; LL-2,6-diaminopimelate from (S)-tetrahydrodipicolinate (acetylase route): step 1/3. Its function is as follows. Catalyzes the transfer of an acetyl group from acetyl-CoA to tetrahydrodipicolinate. This is 2,3,4,5-tetrahydropyridine-2,6-dicarboxylate N-acetyltransferase from Leuconostoc citreum (strain KM20).